Here is a 103-residue protein sequence, read N- to C-terminus: Large ribosomal subunit protein bL21 (103 aa).

It belongs to the bacterial ribosomal protein bL21 family. As to quaternary structure, part of the 50S ribosomal subunit. Contacts protein L20.

This protein binds to 23S rRNA in the presence of protein L20. The polypeptide is Large ribosomal subunit protein bL21 (Clostridium perfringens (strain ATCC 13124 / DSM 756 / JCM 1290 / NCIMB 6125 / NCTC 8237 / Type A)).